Consider the following 149-residue polypeptide: Nucleoside diphosphate kinase (149 aa).

Residues lysine 9, phenylalanine 57, arginine 85, threonine 91, arginine 102, and asparagine 112 each coordinate ATP. Histidine 115 serves as the catalytic Pros-phosphohistidine intermediate.

The protein belongs to the NDK family. As to quaternary structure, homotetramer. Requires Mg(2+) as cofactor.

The protein localises to the cytoplasm. The enzyme catalyses a 2'-deoxyribonucleoside 5'-diphosphate + ATP = a 2'-deoxyribonucleoside 5'-triphosphate + ADP. It carries out the reaction a ribonucleoside 5'-diphosphate + ATP = a ribonucleoside 5'-triphosphate + ADP. Major role in the synthesis of nucleoside triphosphates other than ATP. The ATP gamma phosphate is transferred to the NDP beta phosphate via a ping-pong mechanism, using a phosphorylated active-site intermediate. The polypeptide is Nucleoside diphosphate kinase (Microcystis aeruginosa (strain NIES-843 / IAM M-2473)).